The primary structure comprises 752 residues: MAP/microtubule affinity-regulating kinase 4 (752 aa).

Positions 1–36 are disordered; sequence MSSRTALAPGNDRNSDTHGTLGSGRSSDKGPSWSSR. The Protein kinase domain maps to 59–310; it reads YRLLRTIGKG…LEQIMKDKWI (252 aa). ATP-binding positions include 65–73 and Lys88; that span reads IGKGNFAKV. The Proton acceptor role is filled by Asp181. Thr214 is subject to Phosphothreonine; by LKB1. Positions 324 to 368 constitute a UBA domain; that stretch reads EPEEDFGDTKRIEVMVGMGYTREEIKEALTNQKYNEVTATYLLLG. The disordered stretch occupies residues 385 to 615; it reads ARVRAPSDTT…SGRPRPTTNL (231 aa). Low complexity predominate over residues 391-406; sequence SDTTNGTSSSKGSSHN. Ser423 and Ser543 each carry phosphoserine. Positions 544–553 are enriched in low complexity; that stretch reads PSSHSLAPPS. One can recognise a KA1 domain in the interval 703–752; that stretch reads AGGPEPLSHFEVEVCQLPRPGLRGVLFRRVAGTALAFRTLVTRISNDLEL.

The protein belongs to the protein kinase superfamily. CAMK Ser/Thr protein kinase family. SNF1 subfamily. As to quaternary structure, interacts with MAPT/TAU. Interacts with gamma-tubulin. Interacts with ODF2. Interacts with USP9X. Interacts with YWHAQ. Interacts with NLRP3; promoting NLRP3 recruitment to microtubule organizing center (MTOC). Mg(2+) serves as cofactor. In terms of processing, ubiquitinated with 'Lys-29'- and 'Lys-33'-linked polyubiquitins which appear to impede LKB1-mediated phosphorylation. Deubiquitinated by USP9X. Post-translationally, phosphorylated at Thr-214 by STK11/LKB1 in complex with STE20-related adapter-alpha (STRADA) pseudo kinase and CAB39. Phosphorylated throughout the cell cycle. As to expression, isoform 1 and isoform 2 show similar expression patterns in the central nervous system and are present in the same subsets of neurons including pyramidal and non-pyramidal neurons in the cerebral cortex and hippocampus, cerebellar Purkinje cells, and interneurons and motor neurons in the spinal cord but not in glial cells (at protein level). Isoform 2 is the major isoform in brain and cerebellum. Also expressed in spleen, liver, small intestine, colon, kidney, tongue, testis and lung. Isoform 1 and isoform 2 are expressed at similar levels in heart.

The protein localises to the cytoplasm. It localises to the cytoskeleton. The protein resides in the microtubule organizing center. It is found in the centrosome. Its subcellular location is the cilium axoneme. The protein localises to the cilium basal body. It localises to the cell projection. The protein resides in the dendrite. The catalysed reaction is L-seryl-[protein] + ATP = O-phospho-L-seryl-[protein] + ADP + H(+). The enzyme catalyses L-threonyl-[protein] + ATP = O-phospho-L-threonyl-[protein] + ADP + H(+). Its activity is regulated as follows. Activated by phosphorylation on Thr-214. In terms of biological role, serine/threonine-protein kinase. Phosphorylates the microtubule-associated protein MAPT/TAU. Also phosphorylates the microtubule-associated proteins MAP2 and MAP4. Involved in regulation of the microtubule network, causing reorganization of microtubules into bundles. Required for the initiation of axoneme extension during cilium assembly. Regulates the centrosomal location of ODF2 and phosphorylates ODF2 in vitro. Plays a role in cell cycle progression, specifically in the G1/S checkpoint. Reduces neuronal cell survival. Plays a role in energy homeostasis by regulating satiety and metabolic rate. Promotes adipogenesis by activating JNK1 and inhibiting the p38MAPK pathway, and triggers apoptosis by activating the JNK1 pathway. Phosphorylates mTORC1 complex member RPTOR and acts as a negative regulator of the mTORC1 complex, probably due to disruption of the interaction between phosphorylated RPTOR and the RRAGA/RRAGC heterodimer which is required for mTORC1 activation. Involved in NLRP3 positioning along microtubules by mediating NLRP3 recruitment to microtubule organizing center (MTOC) upon inflammasome activation. This Mus musculus (Mouse) protein is MAP/microtubule affinity-regulating kinase 4.